A 673-amino-acid chain; its full sequence is Armadillo repeat-containing protein 8 (673 aa).

ARM repeat units follow at residues 51–92, 95–134, 138–176, 178–217, 225–265, 269–309, 313–352, 374–413, 416–455, 458–497, 501–540, 543–585, 588–627, and 634–673; these read NKQK…SLSM, ENNI…TVFI, TPVQ…HCCK, PEHQ…VLAY, TLVN…YMCR, IRTE…YLME, ELQR…HDLK, DIRK…SLSR, QQLR…NLLL, SPSK…NMAF, QKVK…NLLS, PHID…NIAD, TAKE…NLIW, and QERQ…QYLA.

In terms of assembly, identified in the CTLH complex that contains at least MAEA, RMND5A (or alternatively its paralog RMND5B), GID8, WDR26, and RANBP9 and/or RANBP10; ARMC8 has an ancillary role in the complex.

The protein localises to the nucleus. The protein resides in the cytoplasm. Its function is as follows. Component of the CTLH E3 ubiquitin-protein ligase complex that mediates ubiquitination and subsequent proteasomal degradation of target proteins. The protein is Armadillo repeat-containing protein 8 (armc8) of Danio rerio (Zebrafish).